A 96-amino-acid polypeptide reads, in one-letter code: Probable RNA-binding protein YqeI (96 aa).

Positions 1-96 (MLTGKQKRFL…SKENKQIELP (96 aa)) constitute a CRM domain.

This Bacillus subtilis (strain 168) protein is Probable RNA-binding protein YqeI (yqeI).